Here is an 82-residue protein sequence, read N- to C-terminus: Small ribosomal subunit protein bS16 (82 aa).

The protein belongs to the bacterial ribosomal protein bS16 family.

In Synechococcus elongatus (strain ATCC 33912 / PCC 7942 / FACHB-805) (Anacystis nidulans R2), this protein is Small ribosomal subunit protein bS16.